Reading from the N-terminus, the 1771-residue chain is Myosin-H heavy chain (1771 aa).

Residues 7–57 form the Myosin N-terminal SH3-like domain; the sequence is CGKEKVWVPNPEKGWINGDLIKEIPGEGWLVRDENGKEIKIEKDELRMQNP. In terms of domain architecture, Myosin motor spans 61 to 840; the sequence is EGIDDMTSLS…IIANLELLRS (780 aa). 154–161 lines the ATP pocket; sequence GESGAGKT. The tract at residues 690 to 712 is actin-binding; sequence LNSLMTTINSTNPHYIRCIKPNT. 3 consecutive IQ domains span residues 843–872, 866–895, and 940–969; these read MINSATFIQKIWRGYTDRKAYTSTKHSSIY, TKHSSIYFQSLIRSYLQQLEYNSMVEENSA, and RIKKIVKIQSLWRSNLAKKQLKLLKAEAKS. Disordered regions lie at residues 1070-1176, 1218-1282, and 1312-1343; these read EKQH…NNVD, VKKS…PINM, and LNNGTNPATSTTNGSGNPLSQSSPTGSDKHIQ. A compositionally biased stretch (polar residues) spans 1077–1111; the sequence is YKNNEVVGNTSFEGSTTTNNGVTSPPKSSPASPIR. Low complexity predominate over residues 1112 to 1139; it reads NSINSNSDTTISGSSDDSIDNTDSLILS. Positions 1143–1153 are enriched in basic and acidic residues; that stretch reads HKGEDRKRNHE. Residues 1180–1224 are a coiled coil; the sequence is RRQFNELEKEYKELKQMDETHKQYIESLKLQITQLEEKVKKSSSH. Positions 1253 to 1281 are enriched in low complexity; that stretch reads NSSSHHQQQQQQHNISPSNSITSTTSPIN. The region spanning 1427–1695 is the Dilute domain; that stretch reads TGVLDPIETN…LTSLMDSPKY (269 aa).

The protein belongs to the TRAFAC class myosin-kinesin ATPase superfamily. Myosin family. As to quaternary structure, myosin I heavy chain is single-headed. Dimer of a heavy and a light chain. Inability to self-assemble into filaments.

Myosin is a protein that binds to actin and has ATPase activity that is activated by actin. In Dictyostelium discoideum (Social amoeba), this protein is Myosin-H heavy chain (myoH).